We begin with the raw amino-acid sequence, 210 residues long: MIRATRVLGQHRWKEAAADSVLLDFDDRHRRRLAMTGTRGLEFLLDLEHATALRGGDALVLEDGRLIEVVAAAEPLLEIRAGDPHHLVRLAWHLGNRHLPTQIMAKSLRIRRDHVIEAMVKGLGARVIEIEAPFDPEGGAYAEPSHAHGDHDHDHHGHDHHGHDHTSHDHAHHSHAHHDHDHGHAHDDHVHDEHCGHDHHHGHSHAHDHK.

Residues 136–210 (PEGGAYAEPS…HGHSHAHDHK (75 aa)) form a disordered region. Composition is skewed to basic and acidic residues over residues 145–169 (SHAH…TSHD) and 178–196 (HDHD…EHCG). Residues 197–210 (HDHHHGHSHAHDHK) are compositionally biased toward basic residues.

This sequence belongs to the UreE family.

The protein resides in the cytoplasm. Involved in urease metallocenter assembly. Binds nickel. Probably functions as a nickel donor during metallocenter assembly. This Bradyrhizobium sp. (strain ORS 278) protein is Urease accessory protein UreE.